A 502-amino-acid chain; its full sequence is Protein adenylyltransferase Fic (502 aa).

A disordered region spans residues 1–24 (MAMATGKATEEEQPEQGQQQQQLQ). Residues 15-24 (EQGQQQQQLQ) are compositionally biased toward low complexity. A helical transmembrane segment spans residues 38–60 (FALFFIAGCLAAFGFHALTSSSG). 2 TPR repeats span residues 122–155 (AMGA…APKH) and 156–190 (PEVL…NPSN). The Inhibitory (S/T)XXXE(G/N) motif signature appears at 247 to 252 (SVGIEG). ATP-binding positions include Glu-251 and 332 to 335 (VGGH). Positions 301–436 (ITLKDILELH…IRPFVRFIAD (136 aa)) constitute a Fido domain. His-379 is a catalytic residue. ATP-binding positions include 383–390 (DGNGRTSR), 415–416 (YY), and Asn-423. The tract at residues 478 to 502 (SPELYESGSGSGAGAGAGSGQKGMP) is disordered. Over residues 486 to 502 (SGSGAGAGAGSGQKGMP) the composition is skewed to gly residues.

Belongs to the fic family. In terms of assembly, homodimer.

It is found in the membrane. The enzyme catalyses L-tyrosyl-[protein] + ATP = O-(5'-adenylyl)-L-tyrosyl-[protein] + diphosphate. The catalysed reaction is L-threonyl-[protein] + ATP = 3-O-(5'-adenylyl)-L-threonyl-[protein] + diphosphate. It catalyses the reaction 3-O-(5'-adenylyl)-L-threonyl-[protein] + H2O = L-threonyl-[protein] + AMP + H(+). With respect to regulation, the side chain of Glu-251 determines which of the two opposing activities (AMPylase or de-AMPylase) will take place. In response to endoplasmic reticulum stress, mediates de-AMPylase activity. Adenylyltransferase activity is inhibited by the inhibitory helix present at the N-terminus: Glu-251 binds ATP and competes with ATP-binding at Arg-390, thereby preventing adenylyltransferase activity. In unstressed cells, disengagement of Glu-251 promotes adenylyltransferase activity. Activation dissociates ATP-binding from Glu-251, allowing ordered binding of the entire ATP moiety with the alpha-phosphate in an orientation that is productive for accepting an incoming target hydroxyl side chain. Functionally, protein that can both mediate the addition of adenosine 5'-monophosphate (AMP) to specific residues of target proteins (AMPylation), and the removal of the same modification from target proteins (de-AMPylation), depending on the context. The side chain of Glu-251 determines which of the two opposing activities (AMPylase or de-AMPylase) will take place. Acts as a key regulator of the unfolded protein response (UPR) by mediating AMPylation or de-AMPylation of Hsc70-3/BiP. In unstressed cells, acts as an adenylyltransferase by mediating AMPylation of Hsc70-3/BiP at 'Thr-518', thereby inactivating it. In response to endoplasmic reticulum stress, acts as a phosphodiesterase by mediating removal of ATP (de-AMPylation) from Hsc70-3/BiP at 'Thr-518', leading to restore HSPA5/BiP activity. In Drosophila mojavensis (Fruit fly), this protein is Protein adenylyltransferase Fic.